The sequence spans 484 residues: ATP synthase subunit beta (484 aa).

Residue 168–175 (GGAGVGKT) coordinates ATP.

This sequence belongs to the ATPase alpha/beta chains family. In terms of assembly, F-type ATPases have 2 components, CF(1) - the catalytic core - and CF(0) - the membrane proton channel. CF(1) has five subunits: alpha(3), beta(3), gamma(1), delta(1), epsilon(1). CF(0) has three main subunits: a(1), b(2) and c(9-12). The alpha and beta chains form an alternating ring which encloses part of the gamma chain. CF(1) is attached to CF(0) by a central stalk formed by the gamma and epsilon chains, while a peripheral stalk is formed by the delta and b chains.

Its subcellular location is the cell membrane. The enzyme catalyses ATP + H2O + 4 H(+)(in) = ADP + phosphate + 5 H(+)(out). Its function is as follows. Produces ATP from ADP in the presence of a proton gradient across the membrane. The catalytic sites are hosted primarily by the beta subunits. This chain is ATP synthase subunit beta, found in Renibacterium salmoninarum (strain ATCC 33209 / DSM 20767 / JCM 11484 / NBRC 15589 / NCIMB 2235).